Reading from the N-terminus, the 461-residue chain is Anthranilate synthase component 1 (461 aa).

Residues Ser-43 and 238–240 (PYM) each bind L-tryptophan. 273–274 (GT) contributes to the chorismate binding site. Glu-300 serves as a coordination point for Mg(2+). Residues Tyr-388, Arg-408, 422-424 (GAG), and Gly-424 contribute to the chorismate site. Glu-437 contacts Mg(2+).

The protein belongs to the anthranilate synthase component I family. As to quaternary structure, heterotetramer consisting of two non-identical subunits: a beta subunit (TrpG) and a large alpha subunit (TrpE). Mg(2+) serves as cofactor.

It catalyses the reaction chorismate + L-glutamine = anthranilate + pyruvate + L-glutamate + H(+). The protein operates within amino-acid biosynthesis; L-tryptophan biosynthesis; L-tryptophan from chorismate: step 1/5. With respect to regulation, feedback inhibited by tryptophan. Part of a heterotetrameric complex that catalyzes the two-step biosynthesis of anthranilate, an intermediate in the biosynthesis of L-tryptophan. In the first step, the glutamine-binding beta subunit (TrpG) of anthranilate synthase (AS) provides the glutamine amidotransferase activity which generates ammonia as a substrate that, along with chorismate, is used in the second step, catalyzed by the large alpha subunit of AS (TrpE) to produce anthranilate. In the absence of TrpG, TrpE can synthesize anthranilate directly from chorismate and high concentrations of ammonia. In Methanothermobacter marburgensis (strain ATCC BAA-927 / DSM 2133 / JCM 14651 / NBRC 100331 / OCM 82 / Marburg) (Methanobacterium thermoautotrophicum), this protein is Anthranilate synthase component 1 (trpE).